The primary structure comprises 63 residues: Large ribosomal subunit protein bL28 (63 aa).

The tract at residues 1 to 21 (MSRRDDLTGKGPMFGNNRSHA) is disordered.

The protein belongs to the bacterial ribosomal protein bL28 family.

The polypeptide is Large ribosomal subunit protein bL28 (Mycoplasmopsis pulmonis (strain UAB CTIP) (Mycoplasma pulmonis)).